The primary structure comprises 548 residues: C-type lectin domain family 4 member F (548 aa).

Topologically, residues 1 to 42 (MKEAELNRDMARYCTDNQCVSLQPQGLGPKSAALMAPRTLRH) are cytoplasmic. Residues 43-69 (VQVILALMVVTVIFSLLALFVVASQPW) traverse the membrane as a helical; Signal-anchor for type II membrane protein segment. At 70 to 548 (RPEWNKEPPS…STGWSAARVG (479 aa)) the chain is on the extracellular side. 6 N-linked (GlcNAc...) asparagine glycosylation sites follow: Asn-86, Asn-92, Asn-115, Asn-132, Asn-209, and Asn-255. The C-type lectin domain maps to 438–538 (KFCTSQGAHL…GSSYPWVCKK (101 aa)). 2 cysteine pairs are disulfide-bonded: Cys-440–Cys-536 and Cys-516–Cys-528.

Kupffer cells.

The protein resides in the membrane. Functionally, receptor with an affinity for galactose and fucose. Could be involved in endocytosis. The chain is C-type lectin domain family 4 member F (Clec4f) from Mus musculus (Mouse).